The chain runs to 456 residues: Putative gluconeogenesis factor (456 aa).

It belongs to the gluconeogenesis factor family.

The protein resides in the cytoplasm. Functionally, required for morphogenesis under gluconeogenic growth conditions. The polypeptide is Putative gluconeogenesis factor (Nostoc sp. (strain PCC 7120 / SAG 25.82 / UTEX 2576)).